Here is a 171-residue protein sequence, read N- to C-terminus: S-ribosylhomocysteine lyase (171 aa).

Fe cation-binding residues include His-54, His-58, and Cys-128.

Belongs to the LuxS family. In terms of assembly, homodimer. Requires Fe cation as cofactor.

The catalysed reaction is S-(5-deoxy-D-ribos-5-yl)-L-homocysteine = (S)-4,5-dihydroxypentane-2,3-dione + L-homocysteine. Its function is as follows. Involved in the synthesis of autoinducer 2 (AI-2) which is secreted by bacteria and is used to communicate both the cell density and the metabolic potential of the environment. The regulation of gene expression in response to changes in cell density is called quorum sensing. Catalyzes the transformation of S-ribosylhomocysteine (RHC) to homocysteine (HC) and 4,5-dihydroxy-2,3-pentadione (DPD). This chain is S-ribosylhomocysteine lyase, found in Campylobacter concisus (strain 13826).